Here is a 194-residue protein sequence, read N- to C-terminus: Serine/threonine-protein kinase mos (194 aa).

The Protein kinase domain maps to 47 to 194 (LCLLNLLGSG…HLDLKPANIF (148 aa)). ATP contacts are provided by residues 53–61 (LGSGGFGSV) and lysine 74. Aspartate 187 serves as the catalytic Proton acceptor.

The protein belongs to the protein kinase superfamily. Ser/Thr protein kinase family.

It carries out the reaction L-seryl-[protein] + ATP = O-phospho-L-seryl-[protein] + ADP + H(+). The catalysed reaction is L-threonyl-[protein] + ATP = O-phospho-L-threonyl-[protein] + ADP + H(+). The protein is Serine/threonine-protein kinase mos (MOS) of Dendroaspis angusticeps (Eastern green mamba).